Reading from the N-terminus, the 513-residue chain is ATP synthase subunit alpha, mitochondrial (513 aa).

170 to 177 (GDRQTGKT) lines the ATP pocket.

The protein belongs to the ATPase alpha/beta chains family. As to quaternary structure, F-type ATPases have 2 components, CF(1) - the catalytic core - and CF(0) - the membrane proton channel. CF(1) has five subunits: alpha(3), beta(3), gamma(1), delta(1), epsilon(1). CF(0) has three main subunits: a, b and c.

The protein resides in the mitochondrion. The protein localises to the mitochondrion inner membrane. Functionally, mitochondrial membrane ATP synthase (F(1)F(0) ATP synthase or Complex V) produces ATP from ADP in the presence of a proton gradient across the membrane which is generated by electron transport complexes of the respiratory chain. F-type ATPases consist of two structural domains, F(1) - containing the extramembraneous catalytic core, and F(0) - containing the membrane proton channel, linked together by a central stalk and a peripheral stalk. During catalysis, ATP synthesis in the catalytic domain of F(1) is coupled via a rotary mechanism of the central stalk subunits to proton translocation. Subunits alpha and beta form the catalytic core in F(1). Rotation of the central stalk against the surrounding alpha(3)beta(3) subunits leads to hydrolysis of ATP in three separate catalytic sites on the beta subunits. Subunit alpha does not bear the catalytic high-affinity ATP-binding sites. This chain is ATP synthase subunit alpha, mitochondrial (ATPA), found in Marchantia polymorpha (Common liverwort).